The primary structure comprises 255 residues: Aprataxin and PNK-like factor (255 aa).

Low complexity predominate over residues 1 to 11 (MSATDASTADS). Disordered regions lie at residues 1-117 (MSAT…VSSS), 131-168 (RRNPAHRSAEAHPGDQDYRRPNFPAPPLGTPACPFGNA), and 195-255 (RLRQ…DDYD). Basic and acidic residues-rich tracts occupy residues 12 to 22 (GAKRKSSEDIT), 40 to 64 (KSEEPVASIKDETNPEVPMKIKAEP), and 137 to 150 (RSAEAHPGDQDYRR). 2 PBZ-type zinc fingers span residues 121-142 (TSCRFGIRCYRRNPAHRSAEAH) and 161-182 (PACPFGNACYRRNPVHFQDYSH). A compositionally biased stretch (acidic residues) spans 207–218 (DDSGTDEEDEPF). Over residues 221–230 (DNDRDADYRP) the composition is skewed to basic and acidic residues. Over residues 234–244 (INEDEDDELEF) the composition is skewed to acidic residues.

The protein belongs to the APLF family.

Functionally, displays apurinic-apyrimidinic (AP) endonuclease and 3'-5' exonuclease activities in vitro. The protein is Aprataxin and PNK-like factor of Drosophila melanogaster (Fruit fly).